A 531-amino-acid polypeptide reads, in one-letter code: Phosphoinositide phospholipase C 9 (531 aa).

One can recognise a PI-PLC X-box domain in the interval 107-253; the sequence is RDMNAPLSHY…LQNKILISRR (147 aa). The 121-residue stretch at 265 to 385 folds into the PI-PLC Y-box domain; sequence ENGVELEIQE…GYVKKPNFLL (121 aa). At Ser-276 the chain carries Phosphoserine. The 128-residue stretch at 386-513 folds into the C2 domain; that stretch reads NAGSSGVFYP…EGIRAVPLYD (128 aa).

Requires Ca(2+) as cofactor. In terms of tissue distribution, expressed in leaves, roots, flowers and siliques.

The protein localises to the cell membrane. The enzyme catalyses a 1,2-diacyl-sn-glycero-3-phospho-(1D-myo-inositol-4,5-bisphosphate) + H2O = 1D-myo-inositol 1,4,5-trisphosphate + a 1,2-diacyl-sn-glycerol + H(+). In terms of biological role, the production of the second messenger molecules diacylglycerol (DAG) and inositol 1,4,5-trisphosphate (IP3) is mediated by activated phosphatidylinositol-specific phospholipase C enzymes. This Arabidopsis thaliana (Mouse-ear cress) protein is Phosphoinositide phospholipase C 9 (PLC9).